The sequence spans 549 residues: Glucose-6-phosphate isomerase 1 (549 aa).

Catalysis depends on E358, which acts as the Proton donor. Residues H389 and K513 contribute to the active site.

The protein belongs to the GPI family.

The protein localises to the cytoplasm. It catalyses the reaction alpha-D-glucose 6-phosphate = beta-D-fructose 6-phosphate. It functions in the pathway carbohydrate biosynthesis; gluconeogenesis. The protein operates within carbohydrate degradation; glycolysis; D-glyceraldehyde 3-phosphate and glycerone phosphate from D-glucose: step 2/4. Functionally, catalyzes the reversible isomerization of glucose-6-phosphate to fructose-6-phosphate. The sequence is that of Glucose-6-phosphate isomerase 1 from Streptomyces avermitilis (strain ATCC 31267 / DSM 46492 / JCM 5070 / NBRC 14893 / NCIMB 12804 / NRRL 8165 / MA-4680).